Here is a 284-residue protein sequence, read N- to C-terminus: Probable tRNA-splicing endonuclease subunit sen34 (284 aa).

Catalysis depends on residues tyrosine 206, histidine 214, and lysine 245.

The protein belongs to the tRNA-intron endonuclease family. Heterotetramer composed of sen2, sen15, sen34 and sen54. Interacts directly with sen15.

The catalysed reaction is pretRNA = a 3'-half-tRNA molecule with a 5'-OH end + a 5'-half-tRNA molecule with a 2',3'-cyclic phosphate end + an intron with a 2',3'-cyclic phosphate and a 5'-hydroxyl terminus.. Constitutes one of the two catalytic subunit of the tRNA-splicing endonuclease complex, a complex responsible for identification and cleavage of the splice sites in pre-tRNA. It cleaves pre-tRNA at the 5'- and 3'-splice sites to release the intron. The products are an intron and two tRNA half-molecules bearing 2',3'-cyclic phosphate and 5'-OH termini. There are no conserved sequences at the splice sites, but the intron is invariably located at the same site in the gene, placing the splice sites an invariant distance from the constant structural features of the tRNA body. It probably carries the active site for 3'-splice site cleavage. The chain is Probable tRNA-splicing endonuclease subunit sen34 (sen34) from Schizosaccharomyces pombe (strain 972 / ATCC 24843) (Fission yeast).